The chain runs to 147 residues: Glucosamine 6-phosphate N-acetyltransferase (147 aa).

In terms of domain architecture, N-acetyltransferase spans 7–147 (LELRVLEESD…AHERQMRLDL (141 aa)). D-glucosamine 6-phosphate is bound by residues threonine 28 and 86–88 (EDV). Acetyl-CoA contacts are provided by residues 88–90 (VVV) and 96–101 (GAGLGK). Residues 117–118 (YK) and aspartate 122 each bind D-glucosamine 6-phosphate. 131–133 (YEK) lines the acetyl-CoA pocket.

This sequence belongs to the acetyltransferase family. GNA1 subfamily. In terms of assembly, homodimer. Post-translationally, contains poly-N-acetyllactosamines.

The protein localises to the glycosome. The enzyme catalyses D-glucosamine 6-phosphate + acetyl-CoA = N-acetyl-D-glucosamine 6-phosphate + CoA + H(+). Its pathway is nucleotide-sugar biosynthesis; UDP-N-acetyl-alpha-D-glucosamine biosynthesis; N-acetyl-alpha-D-glucosamine 1-phosphate from alpha-D-glucosamine 6-phosphate (route I): step 1/2. Its function is as follows. Involved in the biosynthesis of UDP-N-acetyl-alpha-D-glucosamine. Catalyzes the formation of N-acetyl-D-glucosamine 6-phosphate from acetyl-coenzyme A (acetyl-CoA) and D-glucosamine 6-phosphate. The polypeptide is Glucosamine 6-phosphate N-acetyltransferase (Trypanosoma brucei brucei).